The chain runs to 446 residues: Maturase K (446 aa).

The protein belongs to the intron maturase 2 family. MatK subfamily.

Its subcellular location is the plastid. It localises to the chloroplast. Its function is as follows. Usually encoded in the trnK tRNA gene intron. Probably assists in splicing its own and other chloroplast group II introns. The chain is Maturase K from Phalaenopsis aphrodite subsp. formosana (Moth orchid).